We begin with the raw amino-acid sequence, 2318 residues long: Neurogenic locus notch homolog protein 3 (2318 aa).

A compositionally biased stretch (basic residues) spans Met-1 to Leu-14. Residues Met-1–Pro-20 form a disordered region. The signal sequence occupies residues Met-1–Ala-39. EGF-like domains are found at residues Ala-40–Gln-78, Leu-79–Ser-119, and Gln-120–Gln-157. Residues Ala-40–Pro-1643 lie on the Extracellular side of the membrane. 99 disulfide bridges follow: Cys-43/Cys-55, Cys-49/Cys-66, Cys-68/Cys-77, Cys-83/Cys-94, Cys-88/Cys-107, Cys-109/Cys-118, Cys-124/Cys-135, Cys-129/Cys-145, Cys-147/Cys-156, Cys-163/Cys-175, Cys-169/Cys-184, Cys-186/Cys-195, Cys-202/Cys-213, Cys-207/Cys-223, Cys-225/Cys-234, Cys-241/Cys-252, Cys-246/Cys-261, Cys-263/Cys-272, Cys-279/Cys-292, Cys-286/Cys-301, Cys-303/Cys-312, Cys-319/Cys-330, Cys-324/Cys-339, Cys-341/Cys-350, Cys-356/Cys-367, Cys-361/Cys-378, Cys-380/Cys-389, Cys-396/Cys-409, Cys-403/Cys-418, Cys-420/Cys-429, Cys-436/Cys-447, Cys-441/Cys-456, Cys-458/Cys-467, Cys-474/Cys-485, Cys-479/Cys-494, Cys-496/Cys-505, Cys-512/Cys-523, Cys-517/Cys-532, Cys-534/Cys-543, Cys-550/Cys-560, Cys-555/Cys-569, Cys-571/Cys-580, Cys-587/Cys-598, Cys-592/Cys-607, Cys-609/Cys-618, Cys-625/Cys-635, Cys-630/Cys-644, Cys-646/Cys-655, Cys-662/Cys-673, Cys-667/Cys-682, Cys-684/Cys-693, Cys-700/Cys-710, Cys-705/Cys-719, Cys-721/Cys-730, Cys-739/Cys-750, Cys-744/Cys-759, Cys-761/Cys-770, Cys-776/Cys-787, Cys-781/Cys-797, Cys-799/Cys-808, Cys-815/Cys-827, Cys-821/Cys-836, Cys-838/Cys-847, Cys-854/Cys-865, Cys-859/Cys-874, Cys-876/Cys-885, Cys-892/Cys-902, Cys-897/Cys-911, Cys-913/Cys-922, Cys-929/Cys-940, Cys-934/Cys-949, Cys-951/Cys-960, Cys-967/Cys-978, Cys-972/Cys-987, Cys-989/Cys-998, Cys-1005/Cys-1016, Cys-1010/Cys-1023, Cys-1025/Cys-1034, Cys-1041/Cys-1062, Cys-1056/Cys-1071, Cys-1073/Cys-1082, Cys-1089/Cys-1100, Cys-1094/Cys-1109, Cys-1111/Cys-1120, Cys-1127/Cys-1138, Cys-1132/Cys-1147, Cys-1149/Cys-1158, Cys-1165/Cys-1183, Cys-1177/Cys-1192, Cys-1194/Cys-1203, Cys-1210/Cys-1223, Cys-1215/Cys-1233, Cys-1235/Cys-1244, Cys-1251/Cys-1262, Cys-1256/Cys-1276, Cys-1278/Cys-1287, Cys-1294/Cys-1305, Cys-1299/Cys-1314, and Cys-1316/Cys-1325. The region spanning Asp-159–Glu-196 is the EGF-like 4; calcium-binding domain. Residues Pro-198 to Glu-235 enclose the EGF-like 5 domain. Residues Asn-237–Thr-273 form the EGF-like 6; calcium-binding domain. The region spanning Asp-275–Ser-313 is the EGF-like 7 domain. Residues Asn-315–His-351 form the EGF-like 8; calcium-binding domain. The region spanning Leu-352–Asp-390 is the EGF-like 9 domain. In terms of domain architecture, EGF-like 10; calcium-binding spans Asp-392 to Glu-430. Positions Asp-432 to Glu-468 constitute an EGF-like 11; calcium-binding domain. In terms of domain architecture, EGF-like 12; calcium-binding spans Asp-470–Gln-506. The EGF-like 13; calcium-binding domain maps to Asp-508–Glu-544. One can recognise an EGF-like 14; calcium-binding domain in the interval Asn-546–Glu-581. The 37-residue stretch at Gln-583–Glu-619 folds into the EGF-like 15; calcium-binding domain. One can recognise an EGF-like 16; calcium-binding domain in the interval Asn-621–Asn-656. The 37-residue stretch at Glu-658–Leu-694 folds into the EGF-like 17; calcium-binding domain. EGF-like domains follow at residues Ala-696–Ser-731, Ala-735–Glu-771, and Val-772–Gln-809. The 38-residue stretch at Asp-811–Asp-848 folds into the EGF-like 21; calcium-binding domain. Residues Asp-850–Ala-886 enclose the EGF-like 22; calcium-binding domain. The region spanning Asp-888–Glu-923 is the EGF-like 23; calcium-binding domain. 5 EGF-like domains span residues Asp-925 to Gln-961, Glu-963 to Gln-999, Pro-1001 to Asp-1035, Gln-1037 to Glu-1083, and Glu-1085 to Glu-1121. The EGF-like 29; calcium-binding domain occupies Asn-1123–Glu-1159. Positions Asn-1161–Glu-1204 constitute an EGF-like 30; calcium-binding domain. Asn-1180 is a glycosylation site (N-linked (GlcNAc...) asparagine). EGF-like domains follow at residues Asp-1206–Gln-1245, Ala-1247–Glu-1288, Val-1290–Arg-1326, and Thr-1336–Glu-1374. The N-linked (GlcNAc...) asparagine glycan is linked to Asn-1337. Intrachain disulfides connect Cys-1340-Cys-1351, Cys-1345-Cys-1362, Cys-1364-Cys-1373, Cys-1388-Cys-1411, Cys-1393-Cys-1406, Cys-1402-Cys-1418, Cys-1429-Cys-1452, Cys-1434-Cys-1447, Cys-1443-Cys-1459, Cys-1468-Cys-1494, Cys-1476-Cys-1489, and Cys-1485-Cys-1501. LNR repeat units lie at residues Cys-1388–Gln-1428, Cys-1429–Arg-1466, and Cys-1468–Pro-1506. Residue Asn-1439 is glycosylated (N-linked (GlcNAc...) asparagine). Residues Leu-1644–Met-1664 traverse the membrane as a helical segment. Residues Val-1665–Ala-2318 lie on the Cytoplasmic side of the membrane. 5 ANK repeats span residues Thr-1839–Ala-1868, Ser-1872–Ala-1902, Asp-1906–Ala-1935, Leu-1939–Met-1968, and Lys-1972–Ile-2001. Disordered regions lie at residues Leu-2025–Cys-2045 and Gln-2058–Gly-2126. A compositionally biased stretch (low complexity) spans Pro-2028–Cys-2045. Arg-2174 carries the post-translational modification Omega-N-methylarginine. The segment covering Ser-2184–Pro-2193 has biased composition (low complexity). The disordered stretch occupies residues Ser-2184–Ala-2318. A PEST-like region spans residues His-2242 to Pro-2261. Low complexity predominate over residues Ser-2262–Ser-2282. Residues Ser-2296–Gly-2305 are compositionally biased toward polar residues.

Belongs to the NOTCH family. As to quaternary structure, interacts with PSMA1. Heterodimer of a C-terminal fragment N(TM) and a N-terminal fragment N(EC) which are probably linked by disulfide bonds. Interacts with MAML1, MAML2 and MAML3 which act as transcriptional coactivators for NOTCH3. Interacts with HIF1AN. Post-translationally, synthesized in the endoplasmic reticulum as an inactive form which is proteolytically cleaved by a furin-like convertase in the trans-Golgi network before it reaches the plasma membrane to yield an active, ligand-accessible form. Cleavage results in a C-terminal fragment N(TM) and a N-terminal fragment N(EC). Following ligand binding, it is cleaved by TNF-alpha converting enzyme (TACE) to yield a membrane-associated intermediate fragment called notch extracellular truncation (NEXT). This fragment is then cleaved by presenilin dependent gamma-secretase to release a notch-derived peptide containing the intracellular domain (NICD) from the membrane. In terms of processing, phosphorylated. Hydroxylated by HIF1AN. In terms of tissue distribution, proliferating neuroepithelium.

It localises to the cell membrane. Its subcellular location is the nucleus. Functions as a receptor for membrane-bound ligands Jagged1, Jagged2 and Delta1 to regulate cell-fate determination. Upon ligand activation through the released notch intracellular domain (NICD) it forms a transcriptional activator complex with RBPJ/RBPSUH and activates genes of the enhancer of split locus. Affects the implementation of differentiation, proliferation and apoptotic programs. May play a role during CNS development. This Mus musculus (Mouse) protein is Neurogenic locus notch homolog protein 3 (Notch3).